The primary structure comprises 274 residues: NH(3)-dependent NAD(+) synthetase (274 aa).

ATP is bound at residue 46–53 (GISGGQDS). Position 52 (D52) interacts with Mg(2+). R140 is a binding site for deamido-NAD(+). T160 lines the ATP pocket. Position 165 (E165) interacts with Mg(2+). Deamido-NAD(+) is bound by residues K173 and D180. The ATP site is built by K189 and T211. 260 to 261 (HK) is a deamido-NAD(+) binding site.

It belongs to the NAD synthetase family. In terms of assembly, homodimer.

The catalysed reaction is deamido-NAD(+) + NH4(+) + ATP = AMP + diphosphate + NAD(+) + H(+). It functions in the pathway cofactor biosynthesis; NAD(+) biosynthesis; NAD(+) from deamido-NAD(+) (ammonia route): step 1/1. Its function is as follows. Catalyzes the ATP-dependent amidation of deamido-NAD to form NAD. Uses ammonia as a nitrogen source. This is NH(3)-dependent NAD(+) synthetase from Streptococcus pneumoniae (strain 70585).